Reading from the N-terminus, the 209-residue chain is MKKGIIGKKIGMTQIFTEDGTRVPVTVIQAGPCVVTQKKTASIDGYSAVQVGFDSTPAANASKPMLGHCTKSGQGVFRYLREFKFDAASEMNLGDVLTVEQFTAGDFVDVTGTSIGKGFQGVIKRYNFRGGRASHGSRFHRAPGSIGASATPSRVFKNKKMPGQLGNTQVTMQCLQVIRVDADDNLLLIKGAIPGHRNNIVLIKNSVKA.

It belongs to the universal ribosomal protein uL3 family. Part of the 50S ribosomal subunit. Forms a cluster with proteins L14 and L19.

One of the primary rRNA binding proteins, it binds directly near the 3'-end of the 23S rRNA, where it nucleates assembly of the 50S subunit. The protein is Large ribosomal subunit protein uL3 of Pelobacter propionicus (strain DSM 2379 / NBRC 103807 / OttBd1).